The chain runs to 115 residues: NADH-ubiquinone oxidoreductase chain 3 (115 aa).

Transmembrane regions (helical) follow at residues 3 to 23 (LIMV…VAFW), 55 to 75 (FFLV…LLPI), and 84 to 104 (INTM…GLAY).

It belongs to the complex I subunit 3 family. In terms of assembly, core subunit of respiratory chain NADH dehydrogenase (Complex I) which is composed of 45 different subunits. Interacts with TMEM186. Interacts with TMEM242.

The protein resides in the mitochondrion inner membrane. It carries out the reaction a ubiquinone + NADH + 5 H(+)(in) = a ubiquinol + NAD(+) + 4 H(+)(out). Functionally, core subunit of the mitochondrial membrane respiratory chain NADH dehydrogenase (Complex I) which catalyzes electron transfer from NADH through the respiratory chain, using ubiquinone as an electron acceptor. Essential for the catalytic activity of complex I. The polypeptide is NADH-ubiquinone oxidoreductase chain 3 (Scotinomys teguina (Alston's brown mouse)).